We begin with the raw amino-acid sequence, 207 residues long: TM2 domain-containing protein 1 (207 aa).

The N-terminal stretch at 1 to 37 (MAAAWPSGPSAPEAVTARLVGVLWFVSVTTGPWGAVA) is a signal peptide. The Extracellular segment spans residues 40-128 (AGGEESLKCE…YSYKVAVALS (89 aa)). N-linked (GlcNAc...) asparagine glycosylation is found at Asn72, Asn75, Asn87, and Asn96. The TM2 domain occupies 118-166 (GYSYKVAVALSLFLGWLGADRFYLGYPALGLLKFCTVGFCGIGSLIDFI). The chain crosses the membrane as a helical span at residues 129–149 (LFLGWLGADRFYLGYPALGLL). The Cytoplasmic segment spans residues 150-153 (KFCT). The helical transmembrane segment at 154 to 174 (VGFCGIGSLIDFILISMQIVG) threads the bilayer. Over 175-207 (PSDGSSYIIDYYGTRLTRLSITNETFRKTQLYP) the chain is Extracellular. N-linked (GlcNAc...) asparagine glycosylation is present at Asn197.

The protein belongs to the TM2 family. Interacts with APP beta-APP42 (amyloid-beta protein 42). Post-translationally, N-glycosylated. In terms of tissue distribution, widely expressed.

It is found in the membrane. In terms of biological role, may participate in amyloid-beta-induced apoptosis via its interaction with beta-APP42. The protein is TM2 domain-containing protein 1 (TM2D1) of Homo sapiens (Human).